Here is an 89-residue protein sequence, read N- to C-terminus: Small ribosomal subunit protein uS15 (89 aa).

This sequence belongs to the universal ribosomal protein uS15 family. Part of the 30S ribosomal subunit. Forms a bridge to the 50S subunit in the 70S ribosome, contacting the 23S rRNA.

Its function is as follows. One of the primary rRNA binding proteins, it binds directly to 16S rRNA where it helps nucleate assembly of the platform of the 30S subunit by binding and bridging several RNA helices of the 16S rRNA. Functionally, forms an intersubunit bridge (bridge B4) with the 23S rRNA of the 50S subunit in the ribosome. The protein is Small ribosomal subunit protein uS15 of Azoarcus sp. (strain BH72).